The sequence spans 154 residues: uncharacterized protein (154 aa).

Helical transmembrane passes span 5–24 (TLII…GVLL), 29–48 (FYAA…IYAA), 53–75 (PVVV…AIAA), 87–109 (IFWV…SMAV), and 124–146 (ATDY…LSAI).

Its subcellular location is the cell membrane. This is an uncharacterized protein from Archaeoglobus fulgidus (strain ATCC 49558 / DSM 4304 / JCM 9628 / NBRC 100126 / VC-16).